The chain runs to 142 residues: Large ribosomal subunit protein uL11 (142 aa).

The residue at position 2 (A2) is a N,N,N-trimethylalanine. N6,N6,N6-trimethyllysine is present on residues K4 and K40.

It belongs to the universal ribosomal protein uL11 family. Part of the ribosomal stalk of the 50S ribosomal subunit. Interacts with L10 and the large rRNA to form the base of the stalk. L10 forms an elongated spine to which L12 dimers bind in a sequential fashion forming a multimeric L10(L12)X complex. Post-translationally, one or more lysine residues are methylated.

In terms of biological role, forms part of the ribosomal stalk which helps the ribosome interact with GTP-bound translation factors. This chain is Large ribosomal subunit protein uL11, found in Shigella flexneri.